Here is a 229-residue protein sequence, read N- to C-terminus: Heptaprenylglyceryl phosphate synthase (229 aa).

Lys-12 contributes to the sn-glycerol 1-phosphate binding site. Residues Asp-14 and Ser-40 each contribute to the Mg(2+) site. Sn-glycerol 1-phosphate-binding positions include 159 to 164 (YLEYSG), Gly-189, and 209 to 210 (GN).

It belongs to the GGGP/HepGP synthase family. Group I subfamily. Homodimer. Mg(2+) serves as cofactor.

It carries out the reaction sn-glycerol 1-phosphate + all-trans-heptaprenyl diphosphate = 3-heptaprenyl-sn-glycero-1-phosphate + diphosphate. It participates in membrane lipid metabolism; glycerophospholipid metabolism. Prenyltransferase that catalyzes in vivo the transfer of the heptaprenyl moiety of heptaprenyl pyrophosphate (HepPP; 35 carbon atoms) to the C3 hydroxyl of sn-glycerol-1-phosphate (G1P), producing heptaprenylglyceryl phosphate (HepGP). This reaction is an ether-bond-formation step in the biosynthesis of archaea-type G1P-based membrane lipids found in Bacillales. In Bacillus cereus (strain B4264), this protein is Heptaprenylglyceryl phosphate synthase.